Here is a 434-residue protein sequence, read N- to C-terminus: Fc receptor-like protein 6 (434 aa).

Residues 1 to 19 (MLLWTAVLLFVPCVGKTVW) form the signal peptide. 3 Ig-like C2-type domains span residues 20–95 (LYLQ…QTFT), 111–197 (PPVL…PQLE), and 207–293 (PVLT…KKLS). The Extracellular portion of the chain corresponds to 20 to 307 (LYLQAWPNPV…QVLFTPASNW (288 aa)). 3 disulfides stabilise this stretch: Cys39-Cys83, Cys132-Cys180, and Cys228-Cys276. Residue Asn65 is glycosylated (N-linked (GlcNAc...) asparagine). N-linked (GlcNAc...) asparagine glycosylation occurs at Asn273. The helical transmembrane segment at 308-328 (LVPWLPASLLGLMVIAAALLV) threads the bilayer. Over 329–434 (YVRSWRKAGP…PLSDCEEVLC (106 aa)) the chain is Cytoplasmic. An ITIM motif motif is present at residues 369–374 (VVYSVV). Tyr371 carries the phosphotyrosine modification.

In terms of assembly, interacts (tyrosine phosphorylated) with PTPN11. Interacts (tyrosine phosphorylated) with PTPN6, INPP5D, INPPL1 and GRB2. Interacts with class II MHC HLA-DR when the alpha chain is associated with a beta-1, beta-4 or a beta-5 but not a beta-3 chain. In terms of processing, phosphorylated on Tyr residues. Tyrosine phosphorylation induces association with phosphatase PTPN11, PTPN6, INPP5D, INPPL1 and GRB2. In terms of tissue distribution, expressed by cytolytic cells including NK cells, effector and effector-memory CD8(+) T-cells, and a subset of NKT cells (at protein level). Also expressed in gamma delta T cells and in a rare subset of effector CD4(+) T-cells (at protein level). Expressed in spleen, skin, peripheral blood leukocytes, liver, lung, bone marrow, small intestine and placenta. Expression among T-cells is greatly expanded in HIV-1 infected individuals, and includes not only effector and effector-memory CD8(+) T-cells but also populations of CD4(+) T-cells. Expression among CD8(+) T-cells and NK cells is expanded in individuals with chronic lymphocytic leukemia (CLL) but is reduced in PBMCs from patients with acute (AML), chronic myeloid leukemia (CML) and non-Hodgkin's lymphoma. Expression is higher in PBMCs and/or CD3(+) cells of patients with autoimmune diseases, such as rheumatoid arthritis (RA), systemic lupus erythematosus (SLE) and idiopathic thrombocytopenia purpura (ITP). In contrast, expression in CD3(+) cells from patients with lupus anticoagulans (LA) is higher.

The protein resides in the cell membrane. Acts as a MHC class II receptor. When stimulated on its own, does not play a role in cytokine production or the release of cytotoxic granules by NK cells and cytotoxic CD8(+) T cells. Does not act as an Fc receptor. The polypeptide is Fc receptor-like protein 6 (FCRL6) (Homo sapiens (Human)).